A 1036-amino-acid chain; its full sequence is Cysteine-rich motor neuron 1 protein (1036 aa).

An N-terminal signal peptide occupies residues 1–34 (MYLVAGDRGLAGCGHLLVSLLGLLLLLARSGTRA). Positions 35–112 (LVCLPCDESK…EYEAGVCEDE (78 aa)) constitute an IGFBP N-terminal domain. Residues 35–939 (LVCLPCDESK…HPSEDSSLDS (905 aa)) lie on the Extracellular side of the membrane. 4 disulfide bridges follow: Cys37–Cys60, Cys40–Cys62, Cys45–Cys63, and Cys51–Cys66. A glycan (N-linked (GlcNAc...) asparagine) is linked at Asn71. Disulfide bonds link Cys74-Cys90 and Cys84-Cys109. Asn113 carries an N-linked (GlcNAc...) asparagine glycan. Residues 314–316 (RGD) carry the Cell attachment site motif. N-linked (GlcNAc...) asparagine glycosylation occurs at Asn330. 2 VWFC domains span residues 334–391 (PACV…PVCE) and 401–457 (AGCY…PVCE). 4 consecutive Antistasin-like domains span residues 469 to 498 (CGEL…TCQC), 505 to 532 (CSER…ICEC), 539 to 564 (CRPI…ICRC), and 567 to 592 (CPEL…ICKC). A glycan (N-linked (GlcNAc...) asparagine) is linked at Asn474. VWFC domains follow at residues 606 to 663 (GTCL…PSCA) and 677 to 735 (SICH…PQCT). N-linked (GlcNAc...) asparagine glycosylation is present at Asn746. VWFC domains lie at 751–809 (NYCK…PYCI) and 817–874 (VVCH…PMCP). The chain crosses the membrane as a helical span at residues 940–960 (IASVVVPIIICLSIIIAFLFI). Over 961–1036 (NQKKQWIPLL…LQADNFYQTV (76 aa)) the chain is Cytoplasmic. Thr1035 is subject to Phosphothreonine.

As to quaternary structure, interacts with BMP4 and BMP7. Post-translationally, N-glycosylated. Expressed in pancreas, kidney, skeletal muscle, lung, placenta, brain, heart, spleen, liver and small intestine. Expressed in blood vessels (at protein level).

Its subcellular location is the secreted. It localises to the cell membrane. Its function is as follows. May play a role in CNS development by interacting with growth factors implicated in motor neuron differentiation and survival. May play a role in capillary formation and maintenance during angiogenesis. Modulates BMP activity by affecting its processing and delivery to the cell surface. The protein is Cysteine-rich motor neuron 1 protein (CRIM1) of Homo sapiens (Human).